A 506-amino-acid polypeptide reads, in one-letter code: MKFSQWYTLTAPLLISSLYTVNAANDLRGVASDKSDLYKPDAKGNWKCLGSDKLISFNQVNDDYCDCPDGSDEPGTSACHNGKFFCKNTGYISSYIPSNRVDDTVCDCCDGSDESLIKCPNTCAQKAREYLATLEEHNRLVKNGLKIREQWALESAKKTDEVKARYKEISDSLVAVSAEKTQLSEKVEKMKRSTDLGAEAVLPLDFQDLRVALLSLVDERNEMQERLDILTNLLDELTLLYETDKFDETMKEAILSFEDLKEQEIRRKVSSDDVHNYLESCNNHLSMLTGPSEDITFSSLIKDIKKILNSLVWNIKLSLINFGILSPSASSTPLTDSESYRRFEAAQRDLDAAEENEKSLEKEHTKLMHELEYHHGWDLYRAIKGMETKREIGGYTYKVVFYENVFQDSILLGNFASQEGNVLKYENGQSCWNGPHRSAIVTVECGVENEIVSVLEAQKCEYLIKMKSPAACSPDQLKQSLLNTQNSANENAVNGMEDKESSVDEL.

A signal peptide spans 1–23 (MKFSQWYTLTAPLLISSLYTVNA). The cysteines at positions 86 and 108 are disulfide-linked. Coiled-coil stretches lie at residues 172-243 (SLVA…LYET) and 338-374 (ESYR…LEYH). An MRH domain is found at 279 to 474 (ESCNNHLSML…KMKSPAACSP (196 aa)). 2 cysteine pairs are disulfide-bonded: Cys-431/Cys-460 and Cys-445/Cys-472. The ER retrieval sequence motif lies at 503–506 (VDEL).

Heterodimer of a catalytic subunit alpha (gls2) and a subunit beta (gtb1).

Its subcellular location is the endoplasmic reticulum. Its function is as follows. Subunit of glucosidase 2, which cleaves sequentially the 2 innermost alpha-1,3-linked glucose residues from the Glc(2)Man(9)GlcNAc(2) oligosaccharide precursor of immature glycoproteins in the endoplasmic reticulum (ER). Specifically required for the cleavage of the final glucose. The subunit beta retains the catalytic subunit alpha in the ER. This chain is Glucosidase 2 subunit beta (gtb1), found in Schizosaccharomyces pombe (strain 972 / ATCC 24843) (Fission yeast).